Reading from the N-terminus, the 249-residue chain is Probable aquaporin TIP-type (249 aa).

2 helical membrane passes run 22-42 (AGLA…GSGI) and 56-76 (AGLI…VSVG). Positions 85 to 87 (NPA) match the NPA 1 motif. The next 3 membrane-spanning stretches (helical) occupy residues 103 to 123 (IVYI…LVFV), 137 to 157 (VGVG…VYTV), and 169 to 189 (IGII…LVGG). Positions 197–199 (NPA) match the NPA 2 motif. The chain crosses the membrane as a helical span at residues 217–237 (YWAGPLIGGGIAGLVYEVLFI).

Belongs to the MIP/aquaporin (TC 1.A.8) family. TIP (TC 1.A.8.10) subfamily. In terms of tissue distribution, expression is highest in root tips, with slightly lower levels of hybridizing mRNA in stems, and whole roots, and much lower levels in nodules and leaves.

Its subcellular location is the membrane. In terms of biological role, aquaporins facilitate the transport of water and small neutral solutes across cell membranes. The chain is Probable aquaporin TIP-type (MCP1) from Medicago sativa (Alfalfa).